Consider the following 229-residue polypeptide: Potassium/proton antiporter CemA (229 aa).

The next 4 membrane-spanning stretches (helical) occupy residues 6–26, 107–127, 152–172, and 189–209; these read AFIP…ISLC, IFHF…SFWG, FLIL…GWEL, and ILSG…KYWI.

Belongs to the CemA family.

The protein resides in the plastid. Its subcellular location is the chloroplast inner membrane. It carries out the reaction K(+)(in) + H(+)(out) = K(+)(out) + H(+)(in). Its function is as follows. Contributes to K(+)/H(+) antiport activity by supporting proton efflux to control proton extrusion and homeostasis in chloroplasts in a light-dependent manner to modulate photosynthesis. Prevents excessive induction of non-photochemical quenching (NPQ) under continuous-light conditions. Indirectly promotes efficient inorganic carbon uptake into chloroplasts. The sequence is that of Potassium/proton antiporter CemA from Aethionema grandiflorum (Persian stone-cress).